The following is a 245-amino-acid chain: Probable phosphatase YcdX (245 aa).

Residues histidine 7, histidine 9, histidine 15, histidine 40, glutamate 73, histidine 101, histidine 131, aspartate 192, and histidine 194 each contribute to the Zn(2+) site.

The protein belongs to the PHP family. As to quaternary structure, homotrimer. Zn(2+) serves as cofactor.

The polypeptide is Probable phosphatase YcdX (Shigella dysenteriae serotype 1 (strain Sd197)).